Here is a 603-residue protein sequence, read N- to C-terminus: MVTHRRKGGSGPPQKPPPRIVDRSSFDADKKKIKVEKLYHKANNPDNDWPFSFGSVFKMLLSIRISGAIWGIINDCDEVYNYWEPLHLFLYGEGFQTWEYSPVYAIRSYFYIYLHYIPASLFANLFGDTKIVVFTLIRLTIGLFCLLGEYYAFDAICKKINIATGRFFILFSIFSSGMFLASTAFVPSSFCMAITFYILGAYLNENWTAGIFCVAFSTMVGWPFSAVLGLPIVADMLLLKGLRIRFILTSLVIGLCIGGVQVITDSHYFGKTVLAPLNIFLYNVVSGPGPSLYGEEPLSFYIKNLFNNWNIVIFAAPFGFPLSLAYFTKVWMSQDRNVALYQRFAPIILLAVTTAAWLLIFGSQAHKEERFLFPIYPFIAFFAALALDATNRLCLKKLGMDNILSILFILCFAILSASRTYSIHNNYGSHVEIYRSLNAELTNRTNFKNFHDPIRVCVGKEWHRFPSSFFIPQTVSDGKKVEMRFIQSEFRGLLPKPFLKSDKLVEVTRHIPTEMNNLNQEEISRYVDLDSCDYVVDVDMPQSDREPDFRKMEDNWKPVDSLPFIDVSKSTGFHGLLRAFYVPFLSAKHNVMTTCTLYRKSNL.

The interval 1 to 25 is disordered; sequence MVTHRRKGGSGPPQKPPPRIVDRSS. The Lumenal segment spans residues 1–108; sequence MVTHRRKGGS…EYSPVYAIRS (108 aa). The helical transmembrane segment at 109–129 threads the bilayer; that stretch reads YFYIYLHYIPASLFANLFGDT. A topological domain (cytoplasmic) is located at residue lysine 130. A helical transmembrane segment spans residues 131 to 151; the sequence is IVVFTLIRLTIGLFCLLGEYY. Over 152-166 the chain is Lumenal; it reads AFDAICKKINIATGR. The helical transmembrane segment at 167-187 threads the bilayer; sequence FFILFSIFSSGMFLASTAFVP. Topologically, residues 188 to 195 are cytoplasmic; it reads SSFCMAIT. A helical transmembrane segment spans residues 196–216; sequence FYILGAYLNENWTAGIFCVAF. The Lumenal portion of the chain corresponds to 217 to 218; it reads ST. A helical transmembrane segment spans residues 219 to 239; the sequence is MVGWPFSAVLGLPIVADMLLL. Over 240-245 the chain is Cytoplasmic; it reads KGLRIR. Residues 246–266 traverse the membrane as a helical segment; the sequence is FILTSLVIGLCIGGVQVITDS. Topologically, residues 267–310 are lumenal; sequence HYFGKTVLAPLNIFLYNVVSGPGPSLYGEEPLSFYIKNLFNNWN. The chain crosses the membrane as a helical span at residues 311–331; sequence IVIFAAPFGFPLSLAYFTKVW. Topologically, residues 332–343 are cytoplasmic; that stretch reads MSQDRNVALYQR. The helical transmembrane segment at 344–364 threads the bilayer; that stretch reads FAPIILLAVTTAAWLLIFGSQ. The Lumenal portion of the chain corresponds to 365–370; that stretch reads AHKEER. Residues 371–391 traverse the membrane as a helical segment; the sequence is FLFPIYPFIAFFAALALDATN. Topologically, residues 392-397 are cytoplasmic; it reads RLCLKK. Residues 398–418 form a helical membrane-spanning segment; it reads LGMDNILSILFILCFAILSAS. At 419-603 the chain is on the lumenal side; that stretch reads RTYSIHNNYG…TCTLYRKSNL (185 aa). A glycan (N-linked (GlcNAc...) asparagine) is linked at asparagine 443.

This sequence belongs to the glycosyltransferase 22 family.

It is found in the endoplasmic reticulum membrane. It catalyses the reaction an alpha-D-Man-(1-&gt;2)-alpha-D-Man-(1-&gt;2)-alpha-D-Man-(1-&gt;3)-[alpha-D-Man-(1-&gt;3)-alpha-D-Man-(1-&gt;6)]-beta-D-Man-(1-&gt;4)-beta-D-GlcNAc-(1-&gt;4)-alpha-D-GlcNAc-diphospho-di-trans,poly-cis-dolichol + a di-trans,poly-cis-dolichyl beta-D-mannosyl phosphate = an alpha-D-Man-(1-&gt;2)-alpha-D-Man-(1-&gt;2)-alpha-D-Man-(1-&gt;3)-[alpha-D-Man-(1-&gt;2)-alpha-D-Man-(1-&gt;3)-alpha-D-Man-(1-&gt;6)]-beta-D-Man-(1-&gt;4)-beta-D-GlcNAc-(1-&gt;4)-alpha-D-GlcNAc-diphospho-di-trans,poly-cis-dolichol + a di-trans,poly-cis-dolichyl phosphate + H(+). The catalysed reaction is an alpha-D-Man-(1-&gt;2)-alpha-D-Man-(1-&gt;2)-alpha-D-Man-(1-&gt;3)-[alpha-D-Man-(1-&gt;2)-alpha-D-Man-(1-&gt;3)-[alpha-D-Man-(1-&gt;6)]-alpha-D-Man-(1-&gt;6)]-beta-D-Man-(1-&gt;4)-beta-D-GlcNAc-(1-&gt;4)-alpha-D-GlcNAc-diphospho-di-trans,poly-cis-dolichol + a di-trans,poly-cis-dolichyl beta-D-mannosyl phosphate = an alpha-D-Man-(1-&gt;2)-alpha-D-Man-(1-&gt;2)-alpha-D-Man-(1-&gt;3)-[alpha-D-Man-(1-&gt;2)-alpha-D-Man-(1-&gt;3)-[alpha-D-Man-(1-&gt;2)-alpha-D-Man-(1-&gt;6)]-alpha-D-Man-(1-&gt;6)]-beta-D-Man-(1-&gt;4)-beta-D-GlcNAc-(1-&gt;4)-alpha-D-GlcNAc-diphospho-di-trans,poly-cis-dolichol + a di-trans,poly-cis-dolichyl phosphate + H(+). Its pathway is protein modification; protein glycosylation. Its function is as follows. Catalyzes the transfer of mannose from Dol-P-Man to lipid-linked oligosaccharides. This is Alpha-1,2-mannosyltransferase algn-9 from Caenorhabditis elegans.